We begin with the raw amino-acid sequence, 510 residues long: 2,3-bisphosphoglycerate-independent phosphoglycerate mutase (510 aa).

Mn(2+) is bound by residues Asp-14 and Ser-64. Ser-64 serves as the catalytic Phosphoserine intermediate. Substrate contacts are provided by residues His-125, Arg-155–Asp-156, Arg-187, Arg-193, Arg-259–Arg-262, and Lys-332. Residues Asp-399, His-403, Asp-440, His-441, and His-459 each contribute to the Mn(2+) site.

It belongs to the BPG-independent phosphoglycerate mutase family. As to quaternary structure, monomer. Requires Mn(2+) as cofactor.

It catalyses the reaction (2R)-2-phosphoglycerate = (2R)-3-phosphoglycerate. The protein operates within carbohydrate degradation; glycolysis; pyruvate from D-glyceraldehyde 3-phosphate: step 3/5. Catalyzes the interconversion of 2-phosphoglycerate and 3-phosphoglycerate. The sequence is that of 2,3-bisphosphoglycerate-independent phosphoglycerate mutase from Pseudomonas savastanoi pv. phaseolicola (strain 1448A / Race 6) (Pseudomonas syringae pv. phaseolicola (strain 1448A / Race 6)).